Consider the following 200-residue polypeptide: Lipopolysaccharide core heptose(II)-phosphate phosphatase (200 aa).

The N-terminal stretch at 1-25 (MLAFCRSSLKSKKYIIILLALAAIA) is a signal peptide.

Belongs to the phosphoglycerate mutase family. Ais subfamily.

Its subcellular location is the periplasm. The protein operates within bacterial outer membrane biogenesis; lipopolysaccharide metabolism. Functionally, catalyzes the dephosphorylation of heptose(II) of the outer membrane lipopolysaccharide core. The protein is Lipopolysaccharide core heptose(II)-phosphate phosphatase of Escherichia coli (strain ATCC 8739 / DSM 1576 / NBRC 3972 / NCIMB 8545 / WDCM 00012 / Crooks).